Here is a 95-residue protein sequence, read N- to C-terminus: MSIKPLHDRIVVKPIEADEVSPGGIVIPDSAKEKSTKGEVIAVGAGKPLDNGNVRTPCVKVGEKVIYGQYAGSTYKAEGVEYKVLREDDILAIIG.

Belongs to the GroES chaperonin family. In terms of assembly, heptamer of 7 subunits arranged in a ring. Interacts with the chaperonin GroEL.

It is found in the cytoplasm. Functionally, together with the chaperonin GroEL, plays an essential role in assisting protein folding. The GroEL-GroES system forms a nano-cage that allows encapsulation of the non-native substrate proteins and provides a physical environment optimized to promote and accelerate protein folding. GroES binds to the apical surface of the GroEL ring, thereby capping the opening of the GroEL channel. The polypeptide is Co-chaperonin GroES (Xylella fastidiosa (strain M23)).